The primary structure comprises 326 residues: MKYKNILVTGSAGFIGFHLSKYLMDNYEDLKVIGIDNLNNYYNPVLKEKRNEILKNYENYTFIKLDFSDWDDLVENLKDKEIDLIVHLGAQAGVRYSLQNPWAYIKSNEMGTLNIFEFARRFDIEKVVYASSSSVYGGNRKIPFSEDDRVDKPISLYASTKRSNELMAHVYHHLYGIKMIGLRFFTVYGEYGRPDMAYFKFAKNILLGKEIEVYNYGNMERDFTYISDVVDGILRAIKKDFDYEIFNLGNSKPVKLMYFIELIEKYLNKKAKKKFLPMQDGDVLRTYADLSKSEKLLGYKPKVTIEEGLKRFCNWFLENKDWLLRL.

S132 contacts substrate. Y157 acts as the Proton acceptor in catalysis.

It belongs to the NAD(P)-dependent epimerase/dehydratase family. dTDP-glucose dehydratase subfamily.

This is an uncharacterized protein from Methanocaldococcus jannaschii (strain ATCC 43067 / DSM 2661 / JAL-1 / JCM 10045 / NBRC 100440) (Methanococcus jannaschii).